A 467-amino-acid polypeptide reads, in one-letter code: Glutamate--tRNA ligase (467 aa).

A 'HIGH' region motif is present at residues 9-19 (PSPTGYLHIGG). The 'KMSKS' region motif lies at 237–241 (KLSKR). An ATP-binding site is contributed by Lys240.

The protein belongs to the class-I aminoacyl-tRNA synthetase family. Glutamate--tRNA ligase type 1 subfamily. Monomer.

It is found in the cytoplasm. The enzyme catalyses tRNA(Glu) + L-glutamate + ATP = L-glutamyl-tRNA(Glu) + AMP + diphosphate. Catalyzes the attachment of glutamate to tRNA(Glu) in a two-step reaction: glutamate is first activated by ATP to form Glu-AMP and then transferred to the acceptor end of tRNA(Glu). The protein is Glutamate--tRNA ligase of Xanthomonas campestris pv. campestris (strain 8004).